We begin with the raw amino-acid sequence, 205 residues long: Methyltransferase-like 26 B (205 aa).

The protein belongs to the UPF0585 family.

In Danio rerio (Zebrafish), this protein is Methyltransferase-like 26 B.